Reading from the N-terminus, the 65-residue chain is MNAPTERPETSVDPKLLEILVCPLTKGPLEFDSAKQELISRSAKLAYPIRDGIPIMLPEEARKID.

Belongs to the UPF0434 family.

This is UPF0434 protein bsr0601 from Bradyrhizobium diazoefficiens (strain JCM 10833 / BCRC 13528 / IAM 13628 / NBRC 14792 / USDA 110).